The following is a 340-amino-acid chain: Ketol-acid reductoisomerase (NADP(+)) (340 aa).

Residues 3-183 (VNIYYDKDCD…GGGRTGIIET (181 aa)) enclose the KARI N-terminal Rossmann domain. NADP(+) contacts are provided by residues 26 to 29 (FGSQ), S54, and 84 to 87 (DELQ). H109 is an active-site residue. Position 135 (G135) interacts with NADP(+). The region spanning 184-329 (TFKDETETDL…KKLRAMMPWI (146 aa)) is the KARI C-terminal knotted domain. Mg(2+) contacts are provided by D192, E196, E228, and E232. S253 lines the substrate pocket.

Belongs to the ketol-acid reductoisomerase family. Mg(2+) is required as a cofactor.

It catalyses the reaction (2R)-2,3-dihydroxy-3-methylbutanoate + NADP(+) = (2S)-2-acetolactate + NADPH + H(+). It carries out the reaction (2R,3R)-2,3-dihydroxy-3-methylpentanoate + NADP(+) = (S)-2-ethyl-2-hydroxy-3-oxobutanoate + NADPH + H(+). It participates in amino-acid biosynthesis; L-isoleucine biosynthesis; L-isoleucine from 2-oxobutanoate: step 2/4. It functions in the pathway amino-acid biosynthesis; L-valine biosynthesis; L-valine from pyruvate: step 2/4. Functionally, involved in the biosynthesis of branched-chain amino acids (BCAA). Catalyzes an alkyl-migration followed by a ketol-acid reduction of (S)-2-acetolactate (S2AL) to yield (R)-2,3-dihydroxy-isovalerate. In the isomerase reaction, S2AL is rearranged via a Mg-dependent methyl migration to produce 3-hydroxy-3-methyl-2-ketobutyrate (HMKB). In the reductase reaction, this 2-ketoacid undergoes a metal-dependent reduction by NADPH to yield (R)-2,3-dihydroxy-isovalerate. The chain is Ketol-acid reductoisomerase (NADP(+)) from Campylobacter curvus (strain 525.92).